The sequence spans 166 residues: Lipoprotein signal peptidase (166 aa).

The next 3 helical transmembrane spans lie at 12 to 32 (WLWL…LILQ), 70 to 90 (WFFA…MYRS), and 102 to 122 (ALII…GFVV). Catalysis depends on residues D123 and D141. The helical transmembrane segment at 137 to 157 (FNLADSAICIGAALIVLEGFL) threads the bilayer.

It belongs to the peptidase A8 family.

The protein localises to the cell inner membrane. The enzyme catalyses Release of signal peptides from bacterial membrane prolipoproteins. Hydrolyzes -Xaa-Yaa-Zaa-|-(S,diacylglyceryl)Cys-, in which Xaa is hydrophobic (preferably Leu), and Yaa (Ala or Ser) and Zaa (Gly or Ala) have small, neutral side chains.. It functions in the pathway protein modification; lipoprotein biosynthesis (signal peptide cleavage). Its function is as follows. This protein specifically catalyzes the removal of signal peptides from prolipoproteins. The protein is Lipoprotein signal peptidase of Salmonella choleraesuis (strain SC-B67).